Consider the following 142-residue polypeptide: Neuritin (142 aa).

The signal sequence occupies residues 1–27 (MGLKLNGRYISLILAVQIAYLVQAVRA). Residue G116 is the site of GPI-anchor amidated glycine attachment. A propeptide spans 117 to 142 (AAGSLLPALSVLLVSLSAALATWFSF) (removed in mature form).

The protein belongs to the neuritin family. Component of the outer core of AMPAR complex. AMPAR complex consists of an inner core made of 4 pore-forming GluA/GRIA proteins (GRIA1, GRIA2, GRIA3 and GRIA4) and 4 major auxiliary subunits arranged in a twofold symmetry. One of the two pairs of distinct binding sites is occupied either by CNIH2, CNIH3 or CACNG2, CACNG3. The other harbors CACNG2, CACNG3, CACNG4, CACNG8 or GSG1L. This inner core of AMPAR complex is complemented by outer core constituents binding directly to the GluA/GRIA proteins at sites distinct from the interaction sites of the inner core constituents. Outer core constituents include at least PRRT1, PRRT2, CKAMP44/SHISA9, FRRS1L and NRN1. The proteins of the inner and outer core serve as a platform for other, more peripherally associated AMPAR constituents. Alone or in combination, these auxiliary subunits control the gating and pharmacology of the AMPAR complex and profoundly impact their biogenesis and protein processing. Expressed in the brain (at protein level).

The protein resides in the cell membrane. Its subcellular location is the synapse. Functionally, promotes neurite outgrowth and especially branching of neuritic processes in primary hippocampal and cortical cells. The chain is Neuritin (Nrn1) from Mus musculus (Mouse).